Here is a 71-residue protein sequence, read N- to C-terminus: Large ribosomal subunit protein bL31 (71 aa).

Positions 16, 18, 37, and 40 each coordinate Zn(2+).

This sequence belongs to the bacterial ribosomal protein bL31 family. Type A subfamily. As to quaternary structure, part of the 50S ribosomal subunit. Requires Zn(2+) as cofactor.

Functionally, binds the 23S rRNA. The chain is Large ribosomal subunit protein bL31 from Yersinia pseudotuberculosis serotype O:1b (strain IP 31758).